An 89-amino-acid polypeptide reads, in one-letter code: Small ribosomal subunit protein uS17 (89 aa).

Belongs to the universal ribosomal protein uS17 family. Part of the 30S ribosomal subunit.

Its function is as follows. One of the primary rRNA binding proteins, it binds specifically to the 5'-end of 16S ribosomal RNA. This is Small ribosomal subunit protein uS17 from Aromatoleum aromaticum (strain DSM 19018 / LMG 30748 / EbN1) (Azoarcus sp. (strain EbN1)).